Reading from the N-terminus, the 208-residue chain is Uracil phosphoribosyltransferase (208 aa).

Residues arginine 78, arginine 103, and 130–138 (DPMLATGGT) each bind 5-phospho-alpha-D-ribose 1-diphosphate. Residues isoleucine 193 and 198-200 (GDA) contribute to the uracil site. Residue aspartate 199 participates in 5-phospho-alpha-D-ribose 1-diphosphate binding.

This sequence belongs to the UPRTase family. It depends on Mg(2+) as a cofactor.

It carries out the reaction UMP + diphosphate = 5-phospho-alpha-D-ribose 1-diphosphate + uracil. The protein operates within pyrimidine metabolism; UMP biosynthesis via salvage pathway; UMP from uracil: step 1/1. Allosterically activated by GTP. In terms of biological role, catalyzes the conversion of uracil and 5-phospho-alpha-D-ribose 1-diphosphate (PRPP) to UMP and diphosphate. This Desulfotalea psychrophila (strain LSv54 / DSM 12343) protein is Uracil phosphoribosyltransferase.